The primary structure comprises 76 residues: Neuromacin-like protein (76 aa).

Disulfide bonds link Cys18–Cys25, Cys40–Cys44, Cys54–Cys61, and Cys72–Cys74.

The protein belongs to the macin family.

The protein resides in the secreted. In Aplysia californica (California sea hare), this protein is Neuromacin-like protein.